The chain runs to 878 residues: NUT family member 2B (878 aa).

6 disordered regions span residues 273–324 (WSQG…DDSC), 417–512 (QKSQ…PEEI), 527–560 (LLGPSLGATGEPEKQREEGKVKQPQEEDWTPPDP), 624–693 (PPLK…GMAR), 709–757 (LRAA…EEEE), and 775–878 (WLPQ…HCSQ). Composition is skewed to pro residues over residues 278-288 (PLPPPPPPAAQ) and 427-444 (CLPPPATPRLEPRGPPAP). Basic residues predominate over residues 476-487 (TKARRPPPRPHR). Residues 537 to 551 (EPEKQREEGKVKQPQ) show a composition bias toward basic and acidic residues.

The protein belongs to the NUT family.

The chain is NUT family member 2B (NUTM2B) from Homo sapiens (Human).